Reading from the N-terminus, the 228-residue chain is Protein GrpE (228 aa).

Residues 1 to 22 (MDDKQKTNEEVKASSFDSEKSS) show a composition bias toward basic and acidic residues. Residues 1 to 71 (MDDKQKTNEE…DQTNTNNNEL (71 aa)) form a disordered region. Over residues 38 to 53 (QNVQHDNGSNPAQKQN) the composition is skewed to polar residues.

This sequence belongs to the GrpE family. As to quaternary structure, homodimer.

The protein localises to the cytoplasm. In terms of biological role, participates actively in the response to hyperosmotic and heat shock by preventing the aggregation of stress-denatured proteins, in association with DnaK and GrpE. It is the nucleotide exchange factor for DnaK and may function as a thermosensor. Unfolded proteins bind initially to DnaJ; upon interaction with the DnaJ-bound protein, DnaK hydrolyzes its bound ATP, resulting in the formation of a stable complex. GrpE releases ADP from DnaK; ATP binding to DnaK triggers the release of the substrate protein, thus completing the reaction cycle. Several rounds of ATP-dependent interactions between DnaJ, DnaK and GrpE are required for fully efficient folding. The polypeptide is Protein GrpE (Coprothermobacter proteolyticus (strain ATCC 35245 / DSM 5265 / OCM 4 / BT)).